We begin with the raw amino-acid sequence, 215 residues long: MNAPAPSSARRTKKLPPLRVGIGGPVGSGKTTLLEMLCKAMRDRYDLVAITNDIYTKEDQRLLTVAGALPEERIMGVETGGCPHTAIREDASINLEAVDRMLSRFPDADIVFIESGGDNLAATFSPELSDLTIYVIDVAGGEKIPRKGGPGITKSDLLVINKTDLAPLVGANLDVMASDTKKMRGERPYVMTNLKALEGVADVIAFIEKKGLLTV.

The segment at 1–21 is disordered; sequence MNAPAPSSARRTKKLPPLRVG. GTP is bound at residue 24 to 31; sequence GPVGSGKT.

It belongs to the SIMIBI class G3E GTPase family. UreG subfamily. Homodimer. UreD, UreF and UreG form a complex that acts as a GTP-hydrolysis-dependent molecular chaperone, activating the urease apoprotein by helping to assemble the nickel containing metallocenter of UreC. The UreE protein probably delivers the nickel.

The protein localises to the cytoplasm. In terms of biological role, facilitates the functional incorporation of the urease nickel metallocenter. This process requires GTP hydrolysis, probably effectuated by UreG. The sequence is that of Urease accessory protein UreG from Burkholderia lata (strain ATCC 17760 / DSM 23089 / LMG 22485 / NCIMB 9086 / R18194 / 383).